The primary structure comprises 491 residues: Probable diguanylate cyclase CdgI (491 aa).

At 1 to 54 (MIQSTRISMGLFFKYFLSLTKIDPGQNYISLPSIKSSTHIALLFMVSMGTQKLK) the chain is on the cytoplasmic side. Residues 55 to 75 (AQSFFIFSLLLTLILFCITTL) traverse the membrane as a helical segment. The Periplasmic segment spans residues 76–89 (YNENTNVKLIPQMN). The chain crosses the membrane as a helical span at residues 90-110 (YLMVVVALFFLNAVIFLFMLM). The Cytoplasmic portion of the chain corresponds to 111–121 (KYFTNKQILPT). Residues 122–142 (LILSLAFLSGLIYLVETIVII) form a helical membrane-spanning segment. The Periplasmic portion of the chain corresponds to 143–158 (HKPINGSTLIQTKSND). A helical transmembrane segment spans residues 159 to 179 (VSIFYIFRQLSFICLTSLALF). Residues 180 to 193 (CYGKDNILDNNKKK) lie on the Cytoplasmic side of the membrane. Residues 194 to 214 (TGILLLALIPFLVFPLLAHNL) form a helical membrane-spanning segment. Topologically, residues 215 to 236 (SSYNADYSLYVVDYCPDNHTAT) are periplasmic. The chain crosses the membrane as a helical span at residues 237–257 (WGINYTKILVCLWAFLLFFII). At 258-265 (MRTRLASE) the chain is on the cytoplasmic side. A helical membrane pass occupies residues 266-286 (LWPLIALLCLASLCCNLLLLT). At 287–293 (LDEYNYT) the chain is on the periplasmic side. The helical transmembrane segment at 294 to 314 (IWYISRGIEVSSKLFVVSFLI) threads the bilayer. Residues 315–491 (YNIFQELQLS…GGNKVIIHHI (177 aa)) are Cytoplasmic-facing. Residues 356–491 (KDFCVMLVDI…GGNKVIIHHI (136 aa)) form the GGDEF domain. Residues Asp364 and Ile365 each contribute to the Mg(2+) site. The substrate site is built by Asn372, His377, and Asp381. Position 407 (Glu407) interacts with Mg(2+). The active-site Proton acceptor is the Glu407. Arg427 is a substrate binding site.

Homodimer. The cofactor is Mg(2+).

The protein resides in the cell inner membrane. It catalyses the reaction 2 GTP = 3',3'-c-di-GMP + 2 diphosphate. It functions in the pathway purine metabolism; 3',5'-cyclic di-GMP biosynthesis. Catalyzes the synthesis of cyclic-di-GMP (c-di-GMP) via the condensation of 2 GTP molecules. The sequence is that of Probable diguanylate cyclase CdgI from Escherichia coli (strain K12).